A 136-amino-acid chain; its full sequence is Riboflavin kinase (136 aa).

15-20 contributes to the CDP binding site; that stretch reads GLGEGR. Threonine 44 and asparagine 46 together coordinate Mg(2+). Residues threonine 103 and glutamate 111 each contribute to the FMN site. Residue 116 to 119 coordinates CDP; that stretch reads YYLR.

This sequence belongs to the archaeal riboflavin kinase family. The cofactor is Mg(2+).

The catalysed reaction is riboflavin + CTP = CDP + FMN + H(+). It functions in the pathway cofactor biosynthesis; FMN biosynthesis; FMN from riboflavin (CTP route): step 1/1. Its function is as follows. Catalyzes the CTP-dependent phosphorylation of riboflavin (vitamin B2) to form flavin mononucleotide (FMN). This chain is Riboflavin kinase, found in Sulfurisphaera tokodaii (strain DSM 16993 / JCM 10545 / NBRC 100140 / 7) (Sulfolobus tokodaii).